The chain runs to 630 residues: Arginine--tRNA ligase (630 aa).

A 'HIGH' region motif is present at residues 120-130 (ANPVHPLHIGH).

Belongs to the class-I aminoacyl-tRNA synthetase family.

Its subcellular location is the cytoplasm. It carries out the reaction tRNA(Arg) + L-arginine + ATP = L-arginyl-tRNA(Arg) + AMP + diphosphate. This chain is Arginine--tRNA ligase, found in Pyrobaculum aerophilum (strain ATCC 51768 / DSM 7523 / JCM 9630 / CIP 104966 / NBRC 100827 / IM2).